A 98-amino-acid polypeptide reads, in one-letter code: Molybdopterin synthase sulfur carrier subunit (98 aa).

Gly98 bears the 1-thioglycine; alternate mark. Gly98 is modified (glycyl adenylate; alternate).

Belongs to the MoaD family. MOCS2A subfamily. As to quaternary structure, heterotetramer; composed of 2 small (MOCS2A) and 2 large (MOCS2B) subunits. C-terminal thiocarboxylation occurs in 2 steps, it is first acyl-adenylated (-COAMP) via the hesA/moeB/thiF part of MOCS3, then thiocarboxylated (-COSH) via the rhodanese domain of MOCS3.

It is found in the cytoplasm. It functions in the pathway cofactor biosynthesis; molybdopterin biosynthesis. Its function is as follows. Acts as a sulfur carrier required for molybdopterin biosynthesis. Component of the molybdopterin synthase complex that catalyzes the conversion of precursor Z into molybdopterin by mediating the incorporation of 2 sulfur atoms into precursor Z to generate a dithiolene group. In the complex, serves as sulfur donor by being thiocarboxylated (-COSH) at its C-terminus by MOCS3. After interaction with MOCS2B, the sulfur is then transferred to precursor Z to form molybdopterin. The protein is Molybdopterin synthase sulfur carrier subunit of Aedes aegypti (Yellowfever mosquito).